Consider the following 749-residue polypeptide: 5-methyltetrahydropteroyltriglutamate--homocysteine methyltransferase (749 aa).

5-methyltetrahydropteroyltri-L-glutamate is bound by residues R15–K18 and K114. L-homocysteine is bound by residues I425–S427 and E478. Residues I425–S427 and E478 each bind L-methionine. A 5-methyltetrahydropteroyltri-L-glutamate-binding site is contributed by W555. D593 lines the L-homocysteine pocket. D593 serves as a coordination point for L-methionine. E599 provides a ligand contact to 5-methyltetrahydropteroyltri-L-glutamate. The Zn(2+) site is built by H636, C638, and E660. Catalysis depends on H689, which acts as the Proton donor. A Zn(2+)-binding site is contributed by C721.

The protein belongs to the vitamin-B12 independent methionine synthase family. It depends on Zn(2+) as a cofactor.

It carries out the reaction 5-methyltetrahydropteroyltri-L-glutamate + L-homocysteine = tetrahydropteroyltri-L-glutamate + L-methionine. It participates in amino-acid biosynthesis; L-methionine biosynthesis via de novo pathway; L-methionine from L-homocysteine (MetE route): step 1/1. In terms of biological role, catalyzes the transfer of a methyl group from 5-methyltetrahydrofolate to homocysteine resulting in methionine formation. This is 5-methyltetrahydropteroyltriglutamate--homocysteine methyltransferase from Streptococcus pneumoniae serotype 4 (strain ATCC BAA-334 / TIGR4).